The sequence spans 271 residues: Ferric vulnibactin reductase VuuB (271 aa).

Residues 8–131 (VYPMLLDFVR…IGPAGPDPLI (124 aa)) form the FAD-binding FR-type domain.

It belongs to the SIP oxidoreductase family. Monomer. FAD is required as a cofactor.

The protein localises to the cytoplasm. It catalyses the reaction 2 a Fe(II)-siderophore + NAD(+) + H(+) = 2 a Fe(III)-siderophore + NADH. Ferric-siderophore reductase involved in iron removal from the siderophores after their transport into the cell. Acts as a major ferric-vulnibactin reductase catalyzing the reduction of Fe(3+)-vulnibactin, a catecholate siderophore synthesized by V.vulnificus. The chain is Ferric vulnibactin reductase VuuB from Vibrio vulnificus (strain CMCP6).